An 88-amino-acid polypeptide reads, in one-letter code: MKEGIHPEYREVVFMDVQTGNKFITRSTIHTRETVEMDGKTYPLFKCDVTSESHPFYTGAQTRIVETGRVEKFRARFARTAGTVKSAS.

Belongs to the bacterial ribosomal protein bL31 family. Type B subfamily. As to quaternary structure, part of the 50S ribosomal subunit.

The chain is Large ribosomal subunit protein bL31B from Bordetella bronchiseptica (strain ATCC BAA-588 / NCTC 13252 / RB50) (Alcaligenes bronchisepticus).